We begin with the raw amino-acid sequence, 474 residues long: Iroquois-class homeodomain protein IRX-2 (474 aa).

Residues 115-177 (DPAYRKNATR…NARRRLKKEN (63 aa)) constitute a DNA-binding region (homeobox; TALE-type). Disordered regions lie at residues 177 to 220 (NKMT…EDEG), 262 to 373 (EDLE…PGGS), and 420 to 461 (PGET…DTSE). S187 bears the Phosphoserine mark. Residues 196 to 210 (DASRSKEESSDKAQD) show a composition bias toward basic and acidic residues. A compositionally biased stretch (acidic residues) spans 262-275 (EDLEDEEDEEDECE). 2 stretches are compositionally biased toward low complexity: residues 293 to 305 (EAPL…EAAP) and 358 to 373 (PAAA…PGGS).

The protein belongs to the TALE/IRO homeobox family. Expressed in specific and overlapping patterns with Irx1 and Irx3 in the developing and adult metanephric kidney. In the adult metanephros, renal expression is found in the loop of Henle in the S3 proximal tubule segment and in the thick ascending limb (TAL) of the distal tubule.

The protein resides in the nucleus. This is Iroquois-class homeodomain protein IRX-2 (Irx2) from Mus musculus (Mouse).